A 900-amino-acid polypeptide reads, in one-letter code: Vacuolar membrane protein pep3 (900 aa).

The segment at 1–20 (MSLAEDWIDPNSSEDSDIQE) is disordered. TPR repeat units lie at residues 314-345 (HLAF…SPHE), 373-406 (NNET…NTVL), 408-436 (GYAE…VEEV), and 546-579 (MKDQ…ETLI). The CHCR repeat unit spans residues 602–756 (DLDVHALIPS…MFSKKSGIKE (155 aa)). The segment at 837–884 (CWHCNQPLFSEPFVLFPCQHAFHRSCMLEKTYKLASEKNILKECQLCG) adopts an RING-type; atypical zinc-finger fold.

This sequence belongs to the VPS18 family.

It localises to the vacuole membrane. In terms of biological role, required for vacuolar biogenesis. This Schizosaccharomyces pombe (strain 972 / ATCC 24843) (Fission yeast) protein is Vacuolar membrane protein pep3 (pep3).